The chain runs to 130 residues: Glycine cleavage system H protein (130 aa).

Residues 25–106 form the Lipoyl-binding domain; the sequence is MALIGISDFA…PFDSWMIKVK (82 aa). Residue Lys-66 is modified to N6-lipoyllysine.

It belongs to the GcvH family. In terms of assembly, the glycine cleavage system is composed of four proteins: P, T, L and H. (R)-lipoate is required as a cofactor.

The glycine cleavage system catalyzes the degradation of glycine. The H protein shuttles the methylamine group of glycine from the P protein to the T protein. The sequence is that of Glycine cleavage system H protein from Leptospira interrogans serogroup Icterohaemorrhagiae serovar copenhageni (strain Fiocruz L1-130).